Consider the following 179-residue polypeptide: MSANLQNENPEVKELNQLPSRVEEEEDLLLSSTKQWLTEIESEQTNIKEERDPIDPQEIYDLLAKINDPEHPLTLAQLSVVKLEDIEVVDNVEGDSYITVHITPTIPHCSMCTLIGLCIRVRLERCLPPRFHVDVKVKKGTHASESQVNKQLNDKERVAAACENEQLLSVLNGMMATCV.

Positions 1-26 (MSANLQNENPEVKELNQLPSRVEEEE) are disordered.

It belongs to the MIP18 family.

May play a role in chromosome segregation through establishment of sister chromatid cohesion. The polypeptide is MIP18 family protein C144.16 (Schizosaccharomyces pombe (strain 972 / ATCC 24843) (Fission yeast)).